The sequence spans 157 residues: Endoribonuclease YbeY (157 aa).

Zn(2+) is bound by residues His-118, His-122, and His-128.

Belongs to the endoribonuclease YbeY family. It depends on Zn(2+) as a cofactor.

The protein resides in the cytoplasm. Single strand-specific metallo-endoribonuclease involved in late-stage 70S ribosome quality control and in maturation of the 3' terminus of the 16S rRNA. This Bordetella bronchiseptica (strain ATCC BAA-588 / NCTC 13252 / RB50) (Alcaligenes bronchisepticus) protein is Endoribonuclease YbeY.